The sequence spans 191 residues: Pyridoxal 5'-phosphate synthase subunit PdxT (191 aa).

Gly-46–Ser-48 contributes to the L-glutamine binding site. Cys-78 functions as the Nucleophile in the catalytic mechanism. Residues Arg-105 and Ile-133–Arg-134 each bind L-glutamine. Residues His-169 and Glu-171 each act as charge relay system in the active site.

It belongs to the glutaminase PdxT/SNO family. In the presence of PdxS, forms a dodecamer of heterodimers. Only shows activity in the heterodimer.

The enzyme catalyses aldehydo-D-ribose 5-phosphate + D-glyceraldehyde 3-phosphate + L-glutamine = pyridoxal 5'-phosphate + L-glutamate + phosphate + 3 H2O + H(+). The catalysed reaction is L-glutamine + H2O = L-glutamate + NH4(+). It participates in cofactor biosynthesis; pyridoxal 5'-phosphate biosynthesis. In terms of biological role, catalyzes the hydrolysis of glutamine to glutamate and ammonia as part of the biosynthesis of pyridoxal 5'-phosphate. The resulting ammonia molecule is channeled to the active site of PdxS. This Fervidobacterium nodosum (strain ATCC 35602 / DSM 5306 / Rt17-B1) protein is Pyridoxal 5'-phosphate synthase subunit PdxT.